Reading from the N-terminus, the 192-residue chain is Leucine-rich repeat-containing protein 51 (192 aa).

3 LRR repeats span residues 49-71 (SLTQSLWLNNNVLNDLKDFNQVV), 80-101 (NLAWIDLSFNDLTTIDPVLTTF), and 103-124 (NLSVLYLHGNSIHRLGEVNKLA). The 39-residue stretch at 137–175 (NPIEEEKGYRQYVLCNLPRITTFDFSGVTKADRSTAEVW) folds into the LRRCT domain.

The protein resides in the cytoplasm. This is Leucine-rich repeat-containing protein 51 from Rattus norvegicus (Rat).